A 235-amino-acid chain; its full sequence is uncharacterized protein (235 aa).

This sequence to E.coli YbeU.

This is an uncharacterized protein from Escherichia coli (strain K12).